The sequence spans 191 residues: Programmed cell death protein 6 (191 aa).

N-acetylalanine is present on Ala2. 5 consecutive EF-hand domains span residues 23–58 (PDQS…GTWT), 59–89 (PFNP…TGVW), 90–125 (KYIT…FGYR), 126–161 (LSDQ…LQRL), and 162–191 (TDIF…FSIV). The Ca(2+) site is built by Asp36, Asp38, Ser40, Val42, and Glu47. Residues Asp103, Asp105, Ser107, Met109, and Glu114 each coordinate Ca(2+). Residues Asp169, Asp171, Asp173, and Trp175 each coordinate Mg(2+).

In terms of assembly, homodimer and heterodimer; heterodimerizes (via the EF-hand 5) with PEF1. Isoform 1 and isoform 2 self-associate; probably forming homodimers. Interacts with CPNE4 (via VWFA domain). Interacts with PDCD6IP; the interaction is calcium-dependent. Interacts with RBM22. Interacts with PLSCR4. Interacts with ANXA7 and TSG101. Interacts with DAPK1. Interacts with SEC31A; the interaction is calcium-dependent and promotes monoubiquitination of SEC31A. Interacts with ANXA11 (via N-terminus); the interaction is calcium-dependent. Interacts with PLSCR3 (via N-terminus); the interaction is calcium-dependent. Interacts with MCOLN1; the interaction is calcium-dependent. Interacts with KDR; the interaction is calcium-dependent. Interacts with HEBP2; the interaction is calcium-dependent. Interacts with TFG. Isoform 1: Interacts with SHISA5, leading to stabilize it. Isoform 2: Does not interact with SHISA5. Isoform 2: Does not interact with PDCD6IP, TSG101, ANXA7 and ANXA11.

The protein localises to the endoplasmic reticulum membrane. Its subcellular location is the cytoplasmic vesicle. The protein resides in the COPII-coated vesicle membrane. It localises to the cytoplasm. It is found in the nucleus. The protein localises to the endosome. Its function is as follows. Calcium sensor that plays a key role in processes such as endoplasmic reticulum (ER)-Golgi vesicular transport, endosomal biogenesis or membrane repair. Acts as an adapter that bridges unrelated proteins or stabilizes weak protein-protein complexes in response to calcium: calcium-binding triggers exposure of apolar surface, promoting interaction with different sets of proteins thanks to 3 different hydrophobic pockets, leading to translocation to membranes. Involved in ER-Golgi transport by promoting the association between PDCD6IP and TSG101, thereby bridging together the ESCRT-III and ESCRT-I complexes. Together with PEF1, acts as a calcium-dependent adapter for the BCR(KLHL12) complex, a complex involved in ER-Golgi transport by regulating the size of COPII coats. In response to cytosolic calcium increase, the heterodimer formed with PEF1 interacts with, and bridges together the BCR(KLHL12) complex and SEC31 (SEC31A or SEC31B), promoting monoubiquitination of SEC31 and subsequent collagen export, which is required for neural crest specification. Involved in the regulation of the distribution and function of MCOLN1 in the endosomal pathway. Promotes localization and polymerization of TFG at endoplasmic reticulum exit site. Required for T-cell receptor-, Fas-, and glucocorticoid-induced apoptosis. May mediate Ca(2+)-regulated signals along the death pathway: interaction with DAPK1 can accelerate apoptotic cell death by increasing caspase-3 activity. Its role in apoptosis may however be indirect, as suggested by knockout experiments. May inhibit KDR/VEGFR2-dependent angiogenesis; the function involves inhibition of VEGF-induced phosphorylation of the Akt signaling pathway. Has a lower Ca(2+) affinity than isoform 1. The chain is Programmed cell death protein 6 (Pdcd6) from Mus musculus (Mouse).